The chain runs to 250 residues: Ribosomal RNA small subunit methyltransferase J (250 aa).

S-adenosyl-L-methionine-binding positions include 101–102, 117–118, 153–154, and D171; these read RD, ER, and SS.

It belongs to the methyltransferase superfamily. RsmJ family.

The protein localises to the cytoplasm. The catalysed reaction is guanosine(1516) in 16S rRNA + S-adenosyl-L-methionine = N(2)-methylguanosine(1516) in 16S rRNA + S-adenosyl-L-homocysteine + H(+). Functionally, specifically methylates the guanosine in position 1516 of 16S rRNA. This Shigella dysenteriae serotype 1 (strain Sd197) protein is Ribosomal RNA small subunit methyltransferase J.